The following is a 393-amino-acid chain: (S)-mandelate dehydrogenase (393 aa).

The 377-residue stretch at 1–377 (MSQNLFNVED…SPDYLQNEGV (377 aa)) folds into the FMN hydroxy acid dehydrogenase domain. Y26 serves as a coordination point for (S)-mandelate. Residues 79–81 (PTG), S108, and Q129 each bind FMN. (S)-mandelate is bound at residue Y131. Position 156 (T156) interacts with FMN. Residue R165 participates in (S)-mandelate binding. Residue K250 coordinates FMN. (S)-mandelate is bound by residues H274 and R277. The Proton acceptor role is filled by H274. FMN contacts are provided by residues 303 to 307 (DSGFR) and 326 to 327 (GR).

Belongs to the FMN-dependent alpha-hydroxy acid dehydrogenase family. Homotetramer. FMN is required as a cofactor.

The protein localises to the cell inner membrane. It carries out the reaction (S)-mandelate + A = phenylglyoxylate + AH2. It participates in aromatic compound metabolism; (R)-mandelate degradation; benzoate from (R)-mandelate: step 2/4. Catalyzes the dehydrogenation of (S)-mandelate to phenylglyoxylate (benzoylformate). Is likely involved in the utilization of mandelate as a sole source of carbon and energy for growth. Active in vitro with the artificial electron acceptors 2,6-dichlorophenolindophenol (DCPIP) or ferricyanide, but in vivo most likely transfer the electron pair from the reduced flavin to a component of the electron transport chain in the membrane, possibly a quinone. Shows very low activity with oxygen as the electron acceptor, and also with 3-indolelactate and medium chain 2-hydroxyacids as substrates. This Pseudomonas putida (Arthrobacter siderocapsulatus) protein is (S)-mandelate dehydrogenase.